The chain runs to 120 residues: Ribosome-binding factor A (120 aa).

This sequence belongs to the RbfA family. As to quaternary structure, monomer. Binds 30S ribosomal subunits, but not 50S ribosomal subunits or 70S ribosomes.

The protein localises to the cytoplasm. In terms of biological role, one of several proteins that assist in the late maturation steps of the functional core of the 30S ribosomal subunit. Associates with free 30S ribosomal subunits (but not with 30S subunits that are part of 70S ribosomes or polysomes). Required for efficient processing of 16S rRNA. May interact with the 5'-terminal helix region of 16S rRNA. This Rickettsia peacockii (strain Rustic) protein is Ribosome-binding factor A.